The chain runs to 808 residues: Phospholipase D alpha 1 (808 aa).

The C2 domain occupies 1-125 (MAKTLLHGTL…LEGEEVDKWV (125 aa)). Residue Asp186 coordinates Ca(2+). The 39-residue stretch at 326 to 364 (TIFTHHQKIVVVDSEMPTSGSENRRVVSFVGGIDLCDGR) folds into the PLD phosphodiesterase 1 domain. Catalysis depends on residues His331, Lys333, and Asp338. His331 contributes to the a 1,2-diacyl-sn-glycero-3-phosphate binding site. Ca(2+) is bound by residues His370 and His404. A PLD phosphodiesterase 2 domain is found at 654–681 (FMIYVHAKMMIVDDEYIIIGSANINQRS). Residues His659, Lys661, and Asp666 contribute to the active site. His659 provides a ligand contact to a 1,2-diacyl-sn-glycero-3-phosphate. Glu720 contacts Ca(2+).

It belongs to the phospholipase D family. C2-PLD subfamily. Requires Ca(2+) as cofactor.

The catalysed reaction is a 1,2-diacyl-sn-glycero-3-phosphocholine + H2O = a 1,2-diacyl-sn-glycero-3-phosphate + choline + H(+). In terms of biological role, hydrolyzes glycerol-phospholipids at the terminal phosphodiesteric bond. Plays an important role in various cellular processes. This Spuriopimpinella brachycarpa (Chamnamul) protein is Phospholipase D alpha 1 (PLD1).